A 215-amino-acid polypeptide reads, in one-letter code: Charged multivesicular body protein 5 (215 aa).

Residues 29–81 (QMDEKINGLNQELLAYDKQIKATRPGPAQNAIKQKAIRVLQQKKMYERQRDQM) are a coiled coil. Residues 186–215 (TPSVPTTDPHQSSVDEYGLPIGQEASQQVV) form a disordered region. Polar residues predominate over residues 188 to 199 (SVPTTDPHQSSV).

The protein belongs to the SNF7 family. As to quaternary structure, probable peripherally associated component of the endosomal sorting required for transport complex III (ESCRT-III).

It localises to the endosome membrane. Its function is as follows. Probable peripherally associated component of the endosomal sorting required for transport complex III (ESCRT-III) which is involved in multivesicular bodies (MVBs) formation and sorting of endosomal cargo proteins into MVBs. MVBs contain intraluminal vesicles (ILVs) that are generated by invagination and scission from the limiting membrane of the endosome and are delivered to lysosomes enabling degradation of membrane proteins. This chain is Charged multivesicular body protein 5 (chmp5), found in Dictyostelium discoideum (Social amoeba).